The primary structure comprises 90 residues: Small ribosomal subunit protein uS15 (90 aa).

The protein belongs to the universal ribosomal protein uS15 family. Part of the 30S ribosomal subunit. Forms a bridge to the 50S subunit in the 70S ribosome, contacting the 23S rRNA.

One of the primary rRNA binding proteins, it binds directly to 16S rRNA where it helps nucleate assembly of the platform of the 30S subunit by binding and bridging several RNA helices of the 16S rRNA. In terms of biological role, forms an intersubunit bridge (bridge B4) with the 23S rRNA of the 50S subunit in the ribosome. The protein is Small ribosomal subunit protein uS15 of Aliarcobacter butzleri (strain RM4018) (Arcobacter butzleri).